The chain runs to 247 residues: MCEKIQKILARHGYGSRRYIESLIKSHSVKINDEVVKVGQRISINVIQKVIINNNNYKPKLNINKSLKVLLYNKPEGEICTRKDQRNRRTIFEKLPKLSNARWINIGRLDLNSSGLLLFTTDGELAYRLTHPSFNIERIYKVRVFGQFTENILKQLNVRVKLLDGYANFKSIQFKYGEGKNKWFNVSLCEGRHRIVRRIWEKLGFQVNKLVRISYAHLTLPKTLFPGTWITLNKHDIDVLCKKVNLR.

In terms of domain architecture, S4 RNA-binding spans 3 to 73 (EKIQKILARH…NKSLKVLLYN (71 aa)). The active-site Nucleophile is Asp-110.

It belongs to the pseudouridine synthase RsuA family.

It carries out the reaction uridine(2605) in 23S rRNA = pseudouridine(2605) in 23S rRNA. In terms of biological role, responsible for synthesis of pseudouridine from uracil-2605 in 23S ribosomal RNA. The protein is Ribosomal large subunit pseudouridine synthase B (rluB) of Buchnera aphidicola subsp. Baizongia pistaciae (strain Bp).